Here is a 35-residue protein sequence, read N- to C-terminus: MSDIN-like toxin proprotein 1 (35 aa).

Positions 1–10 (MSDINATRLP) are excised as a propeptide. Positions 11–20 (IIIVLGLIIP) form a cross-link, cyclopeptide (Ile-Pro). Positions 21–35 (LCVSDIEMILTRGER) are excised as a propeptide.

The protein belongs to the MSDIN fungal toxin family. Processed by the macrocyclase-peptidase enzyme POPB to yield a toxic cyclic decapeptide. POPB first removes 10 residues from the N-terminus. Conformational trapping of the remaining peptide forces the enzyme to release this intermediate rather than proceed to macrocyclization. The enzyme rebinds the remaining peptide in a different conformation and catalyzes macrocyclization of the N-terminal 10 residues.

Its function is as follows. Probable toxin that belongs to the MSDIN-like toxin family responsible for a large number of food poisoning cases and deaths. The protein is MSDIN-like toxin proprotein 1 of Amanita rimosa.